The sequence spans 152 residues: Urease accessory protein UreE (152 aa).

It belongs to the UreE family.

The protein resides in the cytoplasm. Functionally, involved in urease metallocenter assembly. Binds nickel. Probably functions as a nickel donor during metallocenter assembly. The chain is Urease accessory protein UreE from Psychromonas ingrahamii (strain DSM 17664 / CCUG 51855 / 37).